The sequence spans 953 residues: Isoleucine--tRNA ligase (953 aa).

Residues 57–67 carry the 'HIGH' region motif; the sequence is PYANGDIHIGH. Position 582 (Glu582) interacts with L-isoleucyl-5'-AMP. Positions 623–627 match the 'KMSKS' region motif; the sequence is KMSKS. An ATP-binding site is contributed by Lys626. Residues Cys916, Cys919, Cys936, and Cys939 each coordinate Zn(2+).

Belongs to the class-I aminoacyl-tRNA synthetase family. IleS type 1 subfamily. In terms of assembly, monomer. The cofactor is Zn(2+).

The protein resides in the cytoplasm. The enzyme catalyses tRNA(Ile) + L-isoleucine + ATP = L-isoleucyl-tRNA(Ile) + AMP + diphosphate. In terms of biological role, catalyzes the attachment of isoleucine to tRNA(Ile). As IleRS can inadvertently accommodate and process structurally similar amino acids such as valine, to avoid such errors it has two additional distinct tRNA(Ile)-dependent editing activities. One activity is designated as 'pretransfer' editing and involves the hydrolysis of activated Val-AMP. The other activity is designated 'posttransfer' editing and involves deacylation of mischarged Val-tRNA(Ile). The sequence is that of Isoleucine--tRNA ligase from Bordetella avium (strain 197N).